The following is a 221-amino-acid chain: Glutathione peroxidase 6 (221 aa).

The first 19 residues, 1–19 (MFQQFQASCLVLFFLVGFA), serve as a signal peptide directing secretion. Residue selenocysteine 73 is part of the active site. Selenocysteine 73 is a non-standard amino acid (selenocysteine).

The protein belongs to the glutathione peroxidase family. In terms of tissue distribution, expressed in olfactory epithelium and embryos.

The protein localises to the secreted. It catalyses the reaction 2 glutathione + H2O2 = glutathione disulfide + 2 H2O. The polypeptide is Glutathione peroxidase 6 (GPX6) (Homo sapiens (Human)).